The primary structure comprises 218 residues: Ras-related protein Rab-27B (218 aa).

N-acetylthreonine is present on Thr2. 16 to 24 is a binding site for GTP; sequence GDSGVGKTT. An Effector region motif is present at residues 38–46; it reads FITTVGIDF. GTP contacts are provided by residues 74 to 78, 133 to 136, and 163 to 165; these read DTAGQ, NKAD, and SAA. Cysteines 123 and 188 form a disulfide. Residues Cys216 and Cys218 are each lipidated (S-geranylgeranyl cysteine). Cys218 is subject to Cysteine methyl ester.

Belongs to the small GTPase superfamily. Rab family. Interacts with SYTL2, SYTL4, MYRIP and MLPH. Interacts with RPH3A and RPH3A. Interacts (GDP-bound form preferentially) with DENND10.

The protein resides in the membrane. It localises to the late endosome. The catalysed reaction is GTP + H2O = GDP + phosphate + H(+). With respect to regulation, regulated by guanine nucleotide exchange factors (GEFs) which promote the exchange of bound GDP for free GTP, GTPase activating proteins (GAPs) which increase the GTP hydrolysis activity, and GDP dissociation inhibitors which inhibit the dissociation of the nucleotide from the GTPase. Activated by GEFs such as DENND10. Its function is as follows. Small GTPase which cycles between active GTP-bound and inactive GDP-bound states. In its active state, binds to a variety of effector proteins to regulate homeostasis of late endocytic pathway, including endosomal positioning, maturation and secretion. Plays a role in NTRK2/TRKB axonal anterograde transport by facilitating the association of NTRK2/TRKB with KLC1. May be involved in targeting uroplakins to urothelial apical membranes. This Rattus norvegicus (Rat) protein is Ras-related protein Rab-27B (Rab27b).